The primary structure comprises 481 residues: Alpha-ketoglutaric semialdehyde dehydrogenase 1 (481 aa).

Residues Trp-154–Asn-155, Lys-178–Glu-181, and Gly-231–Ser-232 each bind NADP(+). The Proton acceptor role is filled by Glu-253. Residue Leu-254 coordinates NADP(+). The active-site Nucleophile is Cys-287. Residue Glu-384 coordinates NADP(+).

Belongs to the aldehyde dehydrogenase family. As to quaternary structure, homotetramer.

The enzyme catalyses 2,5-dioxopentanoate + NADP(+) + H2O = 2-oxoglutarate + NADPH + 2 H(+). The catalysed reaction is 2,5-dioxopentanoate + NAD(+) + H2O = 2-oxoglutarate + NADH + 2 H(+). It catalyses the reaction succinate semialdehyde + NAD(+) + H2O = succinate + NADH + 2 H(+). In terms of biological role, catalyzes the NAD(P)(+)-dependent oxidation of alpha-ketoglutaric semialdehyde (alphaKGSA) to alpha-ketoglutarate. Is involved in a degradation pathway of L-arabinose that allows A.brasilense to grow on L-arabinose as a sole carbon source. Prefers NAD(+) to NADP(+) as a cosubstrate. Displays broad substrate specificity: exhibits the highest activity with alphaKGSA and succinic semialdehyde as substrates, but to a lesser extent, is also active with glutaraldehyde, benzaldehyde, and a number of aldehydes from C3 to C8. In Azospirillum brasilense, this protein is Alpha-ketoglutaric semialdehyde dehydrogenase 1 (araE).